A 253-amino-acid chain; its full sequence is Imidazole glycerol phosphate synthase subunit HisF (253 aa).

Active-site residues include Asp-11 and Asp-130.

Belongs to the HisA/HisF family. As to quaternary structure, heterodimer of HisH and HisF.

The protein resides in the cytoplasm. The catalysed reaction is 5-[(5-phospho-1-deoxy-D-ribulos-1-ylimino)methylamino]-1-(5-phospho-beta-D-ribosyl)imidazole-4-carboxamide + L-glutamine = D-erythro-1-(imidazol-4-yl)glycerol 3-phosphate + 5-amino-1-(5-phospho-beta-D-ribosyl)imidazole-4-carboxamide + L-glutamate + H(+). It functions in the pathway amino-acid biosynthesis; L-histidine biosynthesis; L-histidine from 5-phospho-alpha-D-ribose 1-diphosphate: step 5/9. In terms of biological role, IGPS catalyzes the conversion of PRFAR and glutamine to IGP, AICAR and glutamate. The HisF subunit catalyzes the cyclization activity that produces IGP and AICAR from PRFAR using the ammonia provided by the HisH subunit. This is Imidazole glycerol phosphate synthase subunit HisF from Ruegeria sp. (strain TM1040) (Silicibacter sp.).